The chain runs to 908 residues: Putative cell signaling protein HAM1 (908 aa).

Disordered regions lie at residues 1–24 (MSVAATKSEISHNPGKMSVTSAVS) and 177–359 (TKAA…EHRQ). Basic and acidic residues-rich tracts occupy residues 179–192 (AADKSRPSQEKLDS), 231–247 (HPRDDPRDAQLVDDKGK), 261–283 (AKSDAQSKAQDLKSSARDYKETG), 306–321 (EQKEQVKGAAYDKRDA), and 338–359 (NQEKARGKAAALRDRIPEEHRQ). Residues 255–282 (YNQAQEAKSDAQSKAQDLKSSARDYKET) adopt a coiled-coil conformation.

Post-translationally, palmitoylated.

Its function is as follows. May act as a negative regulator of mating during vegetative growth. The sequence is that of Putative cell signaling protein HAM1 from Cryptococcus neoformans var. grubii serotype A (strain H99 / ATCC 208821 / CBS 10515 / FGSC 9487) (Filobasidiella neoformans var. grubii).